A 65-amino-acid chain; its full sequence is Hirudin-3B' (65 aa).

The interval 1-3 (VVY) is interaction with thrombin active site. Cystine bridges form between Cys6–Cys14, Cys16–Cys28, and Cys22–Cys39. Residues 40-65 (VTGEGTPKPQSHNDGDFEEIPEEYLQ) are disordered. Residue Thr45 is glycosylated (O-linked (GalNAc...) threonine). Positions 55–65 (DFEEIPEEYLQ) are interaction with fibrinogen-binding exosite of thrombin. A compositionally biased stretch (acidic residues) spans 55 to 65 (DFEEIPEEYLQ). Residue Tyr63 is modified to Sulfotyrosine.

Belongs to the protease inhibitor I14 (hirudin) family.

It localises to the secreted. In terms of biological role, hirudin is a potent thrombin-specific protease inhibitor. It forms a stable non-covalent complex with alpha-thrombin, thereby abolishing its ability to cleave fibrinogen. This chain is Hirudin-3B', found in Hirudo medicinalis (Medicinal leech).